Here is a 141-residue protein sequence, read N- to C-terminus: Large ribosomal subunit protein uL11 (141 aa).

The protein belongs to the universal ribosomal protein uL11 family. In terms of assembly, part of the ribosomal stalk of the 50S ribosomal subunit. Interacts with L10 and the large rRNA to form the base of the stalk. L10 forms an elongated spine to which L12 dimers bind in a sequential fashion forming a multimeric L10(L12)X complex. In terms of processing, one or more lysine residues are methylated.

Its function is as follows. Forms part of the ribosomal stalk which helps the ribosome interact with GTP-bound translation factors. In Streptococcus agalactiae serotype Ia (strain ATCC 27591 / A909 / CDC SS700), this protein is Large ribosomal subunit protein uL11.